A 317-amino-acid chain; its full sequence is UV DNA damage endonuclease (317 aa).

Belongs to the uve1/UvsE family.

Its function is as follows. Component in a DNA repair pathway. Removal of UV LIGHT damaged nucleotides. Recognizes pyrimidine dimers and cleave a phosphodiester bond immediately 5' to the lesion. This chain is UV DNA damage endonuclease, found in Bacillus mycoides (strain KBAB4) (Bacillus weihenstephanensis).